The following is a 146-amino-acid chain: Acidic phospholipase A2 C (146 aa).

The N-terminal stretch at 1 to 21 (MNPAHLLILAAVCVSPLGASS) is a signal peptide. A propeptide spanning residues 22–27 (NRPMPL) is cleaved from the precursor. Intrachain disulfides connect cysteine 38-cysteine 98, cysteine 53-cysteine 145, cysteine 55-cysteine 71, cysteine 70-cysteine 126, cysteine 77-cysteine 119, cysteine 87-cysteine 112, and cysteine 105-cysteine 117. Residues tyrosine 54, glycine 56, and glycine 58 each contribute to the Ca(2+) site. Residue histidine 74 is part of the active site. Aspartate 75 provides a ligand contact to Ca(2+). Aspartate 120 is a catalytic residue.

The protein belongs to the phospholipase A2 family. Group I subfamily. D49 sub-subfamily. Requires Ca(2+) as cofactor. As to expression, expressed by the venom gland.

The protein localises to the secreted. The catalysed reaction is a 1,2-diacyl-sn-glycero-3-phosphocholine + H2O = a 1-acyl-sn-glycero-3-phosphocholine + a fatty acid + H(+). Its function is as follows. PLA2 catalyzes the calcium-dependent hydrolysis of the 2-acyl groups in 3-sn-phosphoglycerides. In Naja sputatrix (Malayan spitting cobra), this protein is Acidic phospholipase A2 C.